The primary structure comprises 122 residues: Large ribosomal subunit protein bL12 (122 aa).

The tract at residues alanine 96–threonine 122 is disordered. Basic and acidic residues predominate over residues leucine 104–threonine 122.

Belongs to the bacterial ribosomal protein bL12 family. As to quaternary structure, homodimer. Part of the ribosomal stalk of the 50S ribosomal subunit. Forms a multimeric L10(L12)X complex, where L10 forms an elongated spine to which 2 to 4 L12 dimers bind in a sequential fashion. Binds GTP-bound translation factors.

Its function is as follows. Forms part of the ribosomal stalk which helps the ribosome interact with GTP-bound translation factors. Is thus essential for accurate translation. This Liberibacter asiaticus (Citrus greening disease) protein is Large ribosomal subunit protein bL12.